The following is a 93-amino-acid chain: Putative defensin-like protein 190 (93 aa).

An N-terminal signal peptide occupies residues 1-30 (MKMAKAAATNDFGFITCLVIFLVLAGISNG). 4 disulfides stabilise this stretch: C39/C89, C55/C75, C60/C84, and C64/C86.

The protein belongs to the DEFL family.

The protein localises to the secreted. The chain is Putative defensin-like protein 190 from Arabidopsis thaliana (Mouse-ear cress).